Consider the following 196-residue polypeptide: Inosine triphosphate pyrophosphatase 1 (196 aa).

Residue Thr-20–Lys-25 participates in ITP binding. Glu-48 is a Mg(2+) binding site. Residues Lys-61, Asp-77–Thr-78, Lys-94, Phe-153–Asp-156, Lys-177, and Pro-182–Arg-183 each bind ITP.

The protein belongs to the HAM1 NTPase family. In terms of assembly, homodimer. Mg(2+) serves as cofactor. Mn(2+) is required as a cofactor.

It localises to the cytoplasm. It catalyses the reaction ITP + H2O = IMP + diphosphate + H(+). It carries out the reaction dITP + H2O = dIMP + diphosphate + H(+). The enzyme catalyses XTP + H2O = XMP + diphosphate + H(+). Its function is as follows. Pyrophosphatase that hydrolyzes non-canonical purine nucleotides such as inosine triphosphate (ITP), deoxyinosine triphosphate (dITP) or xanthosine 5'-triphosphate (XTP) to their respective monophosphate derivatives. The enzyme does not distinguish between the deoxy- and ribose forms. Probably excludes non-canonical purines from RNA and DNA precursor pools, thus preventing their incorporation into RNA and DNA and avoiding chromosomal lesions. This is Inosine triphosphate pyrophosphatase 1 from Trypanosoma cruzi (strain CL Brener).